A 725-amino-acid chain; its full sequence is Dipeptidyl-peptidase 5 (725 aa).

The signal sequence occupies residues 1-18; sequence MGALRWLSIAATASTALA. N-linked (GlcNAc...) asparagine glycosylation is found at N75, N96, N153, N258, N383, and N453. S563 (charge relay system) is an active-site residue. N-linked (GlcNAc...) asparagine glycosylation occurs at N610. Catalysis depends on charge relay system residues D646 and H678.

Belongs to the peptidase S9C family.

Its subcellular location is the secreted. The polypeptide is Dipeptidyl-peptidase 5 (Aspergillus oryzae (strain ATCC 42149 / RIB 40) (Yellow koji mold)).